Here is an 801-residue protein sequence, read N- to C-terminus: Na(+)/H(+) antiporter subunit A1 (801 aa).

The next 21 helical transmembrane spans lie at 4 to 25 (LHIA…YRFF), 30 to 49 (LGWF…LTLI), 79 to 101 (LGLL…SIGY), 108 to 127 (LGNF…GVVL), 131 to 153 (VIIL…SFWR), 166 to 188 (LIIT…IPTQ), 208 to 230 (FIFA…PFYI), 243 to 265 (SAYL…MTPI), 270 to 289 (QGWI…WASL), 302 to 324 (AFST…ISYH), 339 to 361 (AAIF…TGAV), 373 to 395 (LGGL…LSMA), 429 to 451 (YLFP…KFIM), 472 to 494 (ILML…FPGI), 526 to 548 (AFLS…SYWV), 589 to 611 (NNLV…SVPF), 621 to 641 (IRIF…LILF), 646 to 668 (LFSI…FFKA), 672 to 694 (ALTQ…YHLP), 707 to 729 (LTNA…IAYG), and 767 to 784 (LFES…YTMI).

Belongs to the CPA3 antiporters (TC 2.A.63) subunit A family. May form a heterooligomeric complex that consists of seven subunits: mnhA1, mnhB1, mnhC1, mnhD1, mnhE1, mnhF1 and mnhG1.

It is found in the cell membrane. Its activity is regulated as follows. Na(+) extrusion is completely inhibited by the H(+) conductor carbonyl cyanide m-chlorophenylhydrazone (CCCP). Functionally, mnh complex is a Na(+)/H(+) antiporter involved in Na(+) excretion. The polypeptide is Na(+)/H(+) antiporter subunit A1 (mnhA1) (Staphylococcus aureus (strain MRSA252)).